A 743-amino-acid polypeptide reads, in one-letter code: Threonine synthase-like 1 (743 aa).

Residue K281 is modified to N6-acetyllysine. K351 carries the post-translational modification N6-(pyridoxal phosphate)lysine.

Belongs to the threonine synthase family. Requires pyridoxal 5'-phosphate as cofactor.

This chain is Threonine synthase-like 1 (THNSL1), found in Macaca fascicularis (Crab-eating macaque).